The primary structure comprises 180 residues: NAD(P)H-quinone oxidoreductase subunit I, chloroplastic (180 aa).

2 4Fe-4S ferredoxin-type domains span residues 55 to 84 (GRIHFEFDKCIACEVCVRVCPIDLPVVDWR) and 95 to 124 (LNYSIDFGVCIFCGNCVEYCPTSCLSMTEE). [4Fe-4S] cluster is bound by residues cysteine 64, cysteine 67, cysteine 70, cysteine 74, cysteine 104, cysteine 107, cysteine 110, and cysteine 114.

This sequence belongs to the complex I 23 kDa subunit family. As to quaternary structure, NDH is composed of at least 16 different subunits, 5 of which are encoded in the nucleus. Requires [4Fe-4S] cluster as cofactor.

The protein localises to the plastid. The protein resides in the chloroplast thylakoid membrane. It carries out the reaction a plastoquinone + NADH + (n+1) H(+)(in) = a plastoquinol + NAD(+) + n H(+)(out). It catalyses the reaction a plastoquinone + NADPH + (n+1) H(+)(in) = a plastoquinol + NADP(+) + n H(+)(out). Its function is as follows. NDH shuttles electrons from NAD(P)H:plastoquinone, via FMN and iron-sulfur (Fe-S) centers, to quinones in the photosynthetic chain and possibly in a chloroplast respiratory chain. The immediate electron acceptor for the enzyme in this species is believed to be plastoquinone. Couples the redox reaction to proton translocation, and thus conserves the redox energy in a proton gradient. In Agrostis stolonifera (Creeping bentgrass), this protein is NAD(P)H-quinone oxidoreductase subunit I, chloroplastic.